The following is a 1273-amino-acid chain: Cullin-associated NEDD8-dissociated protein 2 (1273 aa).

The residue at position 2 (serine 2) is an N-acetylserine. 26 HEAT repeats span residues 2–36, 37–74, 82–119, 121–157, 167–205, 209–246, 248–284, 292–329, 364–405, 409–446, 469–506, 554–591, 602–641, 685–722, 727–764, 768–807, 809–850, 894–931, 933–968, 970–1003, 1004–1040, 1044–1081, 1085–1121, 1142–1178, 1194–1231, and 1241–1273; these read STGA…LDPL, PWLQ…ELQK, DSER…KVKE, QVEN…ELPP, SVCR…RLGA, TFHA…ACST, LFVE…SVGR, AHLD…KCPK, TEDS…SRPD, DFHC…HTRP, AQVP…VLPG, PHLP…TLWP, PYVG…HLGD, PILA…SQGL, PAVR…TQPA, EVSG…TRPP, VEYS…ALSA, GPQR…GNLP, FLPF…DNLK, YVED…LVFV, NPPF…DQPH, PLLK…NKPS, DLLD…DDGL, LDIC…LCPA, TCTA…NPEV, and STQI…MELS. The segment at 352-383 is disordered; the sequence is YNHDSDEEEQMETEDSEFSEQESEDEYSDDDD. The span at 356–383 shows a compositional bias: acidic residues; sequence SDEEEQMETEDSEFSEQESEDEYSDDDD.

It belongs to the CAND family. As to quaternary structure, binds TBP, CNOT3 and UBE3C. Ubiquitinated and targeted for proteasomal degradation. Detected in heart and skeletal muscle.

The protein localises to the nucleus. In terms of biological role, probable assembly factor of SCF (SKP1-CUL1-F-box protein) E3 ubiquitin ligase complexes that promotes the exchange of the substrate-recognition F-box subunit in SCF complexes, thereby playing a key role in the cellular repertoire of SCF complexes. The chain is Cullin-associated NEDD8-dissociated protein 2 (Cand2) from Rattus norvegicus (Rat).